Reading from the N-terminus, the 304-residue chain is Mas-related G-protein coupled receptor member A (304 aa).

The Extracellular segment spans residues 1–17 (MDKTIPGSFNSRTLIPN). Residues 18–38 (LLIIISGLVGLIGNAMVFWLL) form a helical membrane-spanning segment. At 39–46 (GFRLARNA) the chain is on the cytoplasmic side. A helical transmembrane segment spans residues 47–67 (FSVYILNLALADFLFLLCHII). Residues 68–80 (DSTLLLLKFSYPN) lie on the Extracellular side of the membrane. A helical transmembrane segment spans residues 81–101 (IIFLPCFNTVMMVPYIAGLSM). Over 102 to 132 (LSAISTERCLSVVCPIWYRCRRPKHTSTVMC) the chain is Cytoplasmic. A helical membrane pass occupies residues 133-153 (SAIWVLSLLICILNRYFCGFL). Over 154 to 167 (DTKYEKDNRCLASN) the chain is Extracellular. Residues 168–188 (FFTAACLIFLFVVLCLSSLAL) form a helical membrane-spanning segment. The Cytoplasmic segment spans residues 189-211 (LVRLFCGAGRMKLTRLYATIMLT). A helical transmembrane segment spans residues 212–232 (VLVFLLCGLPFGIHWFLLIWI). Over 233-244 (KIDYGKFAYGLY) the chain is Extracellular. A helical membrane pass occupies residues 245 to 265 (LAALVLTAVNSCANPIIYFFV). Residues 266-304 (GSFRHQKHQTLKMVLQRALQDTPETAENTVEMSSSKVEP) are Cytoplasmic-facing.

This sequence belongs to the G-protein coupled receptor 1 family. Mas subfamily. In terms of tissue distribution, expressed in a subset of IB4-positive small diameter nociceptive dorsal root neurons.

The protein localises to the cell membrane. In terms of biological role, orphan receptor activated by a subset of RFamide-family neuropeptides such as FLRF-amide and FMRF-amide. Mediates its action by association with G proteins that activate a phosphatidylinositol-calcium second messenger system. Its effect is mediated by G(q) and G(11) proteins. May regulate the function of nociceptive neurons by modulation of pain perception. This is Mas-related G-protein coupled receptor member A (Mrgpra) from Rattus norvegicus (Rat).